A 443-amino-acid polypeptide reads, in one-letter code: Glutamate--tRNA ligase 2 (443 aa).

A 'HIGH' region motif is present at residues 7–17 (PSPTGLIHVGN). Positions 240–244 (KLSKR) match the 'KMSKS' region motif. K243 serves as a coordination point for ATP.

This sequence belongs to the class-I aminoacyl-tRNA synthetase family. Glutamate--tRNA ligase type 1 subfamily. In terms of assembly, monomer.

The protein localises to the cytoplasm. The enzyme catalyses tRNA(Glu) + L-glutamate + ATP = L-glutamyl-tRNA(Glu) + AMP + diphosphate. Its function is as follows. Catalyzes the attachment of glutamate to tRNA(Glu) in a two-step reaction: glutamate is first activated by ATP to form Glu-AMP and then transferred to the acceptor end of tRNA(Glu). In Gluconacetobacter diazotrophicus (strain ATCC 49037 / DSM 5601 / CCUG 37298 / CIP 103539 / LMG 7603 / PAl5), this protein is Glutamate--tRNA ligase 2.